The primary structure comprises 170 residues: Protein FAM209 (170 aa).

Positions 1-20 (MRTLLRWCLFLSLCVSCACA) are cleaved as a signal peptide. The chain crosses the membrane as a helical span at residues 56–76 (WLGNKWLWLFVAIMIYVMLKF). Positions 83–107 (KEQHPPGLRGCQLRSPPKKAQNISP) are disordered.

As to quaternary structure, interacts with DPY19L2. Interacts with CYLC1; the interaction may be relevant for proper acrosome attachment to the nuclear envelope. Predominately expressed in testis.

The protein localises to the nucleus inner membrane. Functionally, required for sperm acrosome biogenesis. The polypeptide is Protein FAM209 (Mus musculus (Mouse)).